Consider the following 296-residue polypeptide: GTPase Era (296 aa).

Residues lysine 7–tyrosine 174 enclose the Era-type G domain. Positions glycine 15 to serine 22 are G1. Residue glycine 15–serine 22 participates in GTP binding. The tract at residues glutamine 41–valine 45 is G2. A G3 region spans residues aspartate 62 to glycine 65. GTP-binding positions include aspartate 62–isoleucine 66 and asparagine 124–aspartate 127. Positions asparagine 124–aspartate 127 are G4. Positions isoleucine 153–alanine 155 are G5. The region spanning leucine 205–glutamate 282 is the KH type-2 domain.

The protein belongs to the TRAFAC class TrmE-Era-EngA-EngB-Septin-like GTPase superfamily. Era GTPase family. Monomer.

It is found in the cytoplasm. The protein localises to the cell inner membrane. An essential GTPase that binds both GDP and GTP, with rapid nucleotide exchange. Plays a role in 16S rRNA processing and 30S ribosomal subunit biogenesis and possibly also in cell cycle regulation and energy metabolism. This is GTPase Era from Ehrlichia ruminantium (strain Welgevonden).